The chain runs to 150 residues: Deoxyuridine 5'-triphosphate nucleotidohydrolase (150 aa).

Residues 69 to 71, Asn-82, 86 to 88, and Lys-96 contribute to the substrate site; these read RSG and LID.

Belongs to the dUTPase family. The cofactor is Mg(2+).

It catalyses the reaction dUTP + H2O = dUMP + diphosphate + H(+). It participates in pyrimidine metabolism; dUMP biosynthesis; dUMP from dCTP (dUTP route): step 2/2. In terms of biological role, this enzyme is involved in nucleotide metabolism: it produces dUMP, the immediate precursor of thymidine nucleotides and it decreases the intracellular concentration of dUTP so that uracil cannot be incorporated into DNA. In Neisseria gonorrhoeae (strain NCCP11945), this protein is Deoxyuridine 5'-triphosphate nucleotidohydrolase.